The following is a 393-amino-acid chain: L-methionine gamma-lyase (393 aa).

Residues 63-65 (YQR) and 93-94 (GM) each bind pyridoxal 5'-phosphate. Y119 serves as a coordination point for L-homocysteine. 206–208 (SAT) contacts pyridoxal 5'-phosphate. The residue at position 209 (K209) is an N6-(pyridoxal phosphate)lysine. R367 contacts L-homocysteine. R367 serves as a coordination point for L-methionine.

The protein belongs to the trans-sulfuration enzymes family. L-methionine gamma-lyase subfamily. Homotetramer. Pyridoxal 5'-phosphate is required as a cofactor.

It carries out the reaction L-methionine + H2O = methanethiol + 2-oxobutanoate + NH4(+). It catalyses the reaction L-homocysteine + H2O = 2-oxobutanoate + hydrogen sulfide + NH4(+) + H(+). In terms of biological role, catalyzes the alpha,gamma-elimination of L-methionine to produce methanethiol, 2-oxobutanoate and ammonia. Is also able to catalyze the alpha,gamma-elimination of L-homocysteine. This chain is L-methionine gamma-lyase, found in Brevibacterium sandarakinum.